Reading from the N-terminus, the 156-residue chain is Small ribosomal subunit protein uS7 (156 aa).

The protein belongs to the universal ribosomal protein uS7 family. As to quaternary structure, part of the 30S ribosomal subunit. Contacts proteins S9 and S11.

In terms of biological role, one of the primary rRNA binding proteins, it binds directly to 16S rRNA where it nucleates assembly of the head domain of the 30S subunit. Is located at the subunit interface close to the decoding center, probably blocks exit of the E-site tRNA. This chain is Small ribosomal subunit protein uS7, found in Clostridium botulinum (strain 657 / Type Ba4).